Consider the following 202-residue polypeptide: Dephospho-CoA kinase (202 aa).

Residues 6 to 202 (KISVTGDPSS…QCFKALKGTI (197 aa)) enclose the DPCK domain. An ATP-binding site is contributed by 14 to 19 (SSGKTE).

This sequence belongs to the CoaE family.

Its subcellular location is the cytoplasm. The enzyme catalyses 3'-dephospho-CoA + ATP = ADP + CoA + H(+). It participates in cofactor biosynthesis; coenzyme A biosynthesis; CoA from (R)-pantothenate: step 5/5. Its function is as follows. Catalyzes the phosphorylation of the 3'-hydroxyl group of dephosphocoenzyme A to form coenzyme A. This is Dephospho-CoA kinase from Chlamydia trachomatis serovar D (strain ATCC VR-885 / DSM 19411 / UW-3/Cx).